The primary structure comprises 294 residues: Survival motor neuron protein (294 aa).

Gly residues predominate over residues 1 to 10 (MAMSSGGSGS). The interval 1–32 (MAMSSGGSGSGVPEQEDAVLFRRGTGQSDDSD) is disordered. A2 carries the N-acetylalanine modification. Phosphoserine; by PKA is present on residues S4, S5, and S8. The tract at residues 13 to 44 (PEQEDAVLFRRGTGQSDDSDIWDDTALIKAYD) is P1 (binding site for GEMIN2). Phosphothreonine is present on T25. Phosphoserine occurs at positions 28 and 31. Residue K51 forms a Glycyl lysine isopeptide (Lys-Gly) (interchain with G-Cter in SUMO2) linkage. Residues 60–88 (CETSGKSKTTPKRKPAKKNKSQKKNTAAS) are disordered. The segment covering 68–82 (TTPKRKPAKKNKSQK) has biased composition (basic residues). The residue at position 69 (T69) is a Phosphothreonine. At T85 the chain carries Phosphothreonine; by PKA. The Tudor domain maps to 91 to 151 (QWKVGDKCSA…LSPICEVANN (61 aa)). Positions 97–209 (KCSAIWSEDG…MPGPRLGPGK (113 aa)) are required for interaction with RPP20/POP7. Residues 156 to 166 (AQENENESQVS) are compositionally biased toward low complexity. Residues 156-222 (AQENENESQV…KFNGPPPPPP (67 aa)) form a disordered region. S187 is subject to Phosphoserine; by PKA. Residues 194–204 (LPPPPPMPGPR) show a composition bias toward pro residues. Positions 206–215 (GPGKPGLKFN) are enriched in low complexity. K209 is covalently cross-linked (Glycyl lysine isopeptide (Lys-Gly) (interchain with G-Cter in SUMO2)). Residues 240 to 267 (PPIIPPPPPICPDSLDDADALGSMLISW) form a P2 (binding site for SM B) region. The tract at residues 279 to 294 (GFRQNQKEGRCSHSLN) is required for interaction with SYNCRIP.

Belongs to the SMN family. Homooligomer; may form higher order homooligomers in the dimer to octamer range. Part of the core SMN complex that contains SMN1, GEMIN2/SIP1, DDX20/GEMIN3, GEMIN4, GEMIN5, GEMIN6, GEMIN7, GEMIN8 and STRAP/UNRIP. Part of the SMN-Sm complex that contains SMN1, GEMIN2/SIP1, DDX20/GEMIN3, GEMIN4, GEMIN5, GEMIN6, GEMIN7, GEMIN8, STRAP/UNRIP and the Sm proteins SNRPB, SNRPD1, SNRPD2, SNRPD3, SNRPE, SNRPF and SNRPG. Component of an import snRNP complex composed of KPNB1, RNUT1, SMN1 and ZNF259. Interacts with DDX20, FBL, NOLA1, RNUT1, SYNCRIP and with several spliceosomal snRNP core Sm proteins, including SNRPB, SNRPD1, SNRPD2, SNRPD3, SNRPE and ILF3. Interacts with GEMIN2; the interaction is direct. Interacts with GEMIN3; the interaction is direct. Interacts with GEMIN8; the interaction is direct. Interacts with SNRPB; the interaction is direct. Interacts (via Tudor domain) with SNRPD1 (via C-terminus); the interaction is direct. Interacts with SNRPD2; the interaction is direct. Interacts (via Tudor domain) with SNRPD3 (via C-terminus); the interaction is direct. Interacts with SNRPE; the interaction is direct. Interacts with OSTF1, LSM10, LSM11 and RPP20/POP7. Interacts (via C-terminal region) with ZPR1 (via C-terminal region). Interacts (via Tudor domain) with COIL. Interacts with SETX; recruits SETX to POLR2A. Interacts with POLR2A (via the C-terminal domain (CTD)). Interacts with PRMT5. Interacts with XRN2. Interacts (via C-terminus) with FMR1 (via C-terminus); the interaction is direct and occurs in a RNA-independent manner. Interacts (via Tudor domain) with SF3B2 ('Arg-508'-methylated form). Interacts with WRAP53/TCAB1. Interacts (via Tudor domain) with ELAVL4 in an RNA-independent manner; the interaction is required for localization of ELAVL4 to RNA granules. Interacts with FRG1.

Its subcellular location is the nucleus. The protein resides in the gem. It localises to the cajal body. It is found in the cytoplasm. The protein localises to the cytoplasmic granule. Its subcellular location is the perikaryon. The protein resides in the cell projection. It localises to the neuron projection. It is found in the axon. The protein localises to the myofibril. Its subcellular location is the sarcomere. The protein resides in the z line. In terms of biological role, the SMN complex catalyzes the assembly of small nuclear ribonucleoproteins (snRNPs), the building blocks of the spliceosome, and thereby plays an important role in the splicing of cellular pre-mRNAs. Most spliceosomal snRNPs contain a common set of Sm proteins SNRPB, SNRPD1, SNRPD2, SNRPD3, SNRPE, SNRPF and SNRPG that assemble in a heptameric protein ring on the Sm site of the small nuclear RNA to form the core snRNP (Sm core). In the cytosol, the Sm proteins SNRPD1, SNRPD2, SNRPE, SNRPF and SNRPG are trapped in an inactive 6S pICln-Sm complex by the chaperone CLNS1A that controls the assembly of the core snRNP. To assemble core snRNPs, the SMN complex accepts the trapped 5Sm proteins from CLNS1A forming an intermediate. Binding of snRNA inside 5Sm ultimately triggers eviction of the SMN complex, thereby allowing binding of SNRPD3 and SNRPB to complete assembly of the core snRNP. Within the SMN complex, SMN1 acts as a structural backbone and together with GEMIN2 it gathers the Sm complex subunits. Ensures the correct splicing of U12 intron-containing genes that may be important for normal motor and proprioceptive neurons development. Also required for resolving RNA-DNA hybrids created by RNA polymerase II, that form R-loop in transcription terminal regions, an important step in proper transcription termination. May also play a role in the metabolism of small nucleolar ribonucleoprotein (snoRNPs). This Pongo abelii (Sumatran orangutan) protein is Survival motor neuron protein (SMN1).